We begin with the raw amino-acid sequence, 256 residues long: ATP synthase peripheral stalk subunit b, mitochondrial (256 aa).

Residues 1–42 constitute a mitochondrion transit peptide; it reads MLSRVVLSAAAAAAPSLKNAALLGPGVLQATRIFHTGQPSLA. Lysine 131 carries the post-translational modification N6-succinyllysine. Lysine 139, lysine 154, lysine 162, lysine 221, lysine 233, and lysine 244 each carry N6-acetyllysine.

It belongs to the eukaryotic ATPase B chain family. As to quaternary structure, component of the ATP synthase complex composed at least of ATP5F1A/subunit alpha, ATP5F1B/subunit beta, ATP5MC1/subunit c (homooctomer), MT-ATP6/subunit a, MT-ATP8/subunit 8, ATP5ME/subunit e, ATP5MF/subunit f, ATP5MG/subunit g, ATP5MK/subunit k, ATP5MJ/subunit j, ATP5F1C/subunit gamma, ATP5F1D/subunit delta, ATP5F1E/subunit epsilon, ATP5PF/subunit F6, ATP5PB/subunit b, ATP5PD/subunit d, ATP5PO/subunit OSCP. ATP synthase complex consists of a soluble F(1) head domain (subunits alpha(3) and beta(3)) - the catalytic core - and a membrane F(0) domain - the membrane proton channel (subunits c, a, 8, e, f, g, k and j). These two domains are linked by a central stalk (subunits gamma, delta, and epsilon) rotating inside the F1 region and a stationary peripheral stalk (subunits F6, b, d, and OSCP).

The protein localises to the mitochondrion. Its subcellular location is the mitochondrion inner membrane. Its function is as follows. Subunit b, of the mitochondrial membrane ATP synthase complex (F(1)F(0) ATP synthase or Complex V) that produces ATP from ADP in the presence of a proton gradient across the membrane which is generated by electron transport complexes of the respiratory chain. ATP synthase complex consist of a soluble F(1) head domain - the catalytic core - and a membrane F(1) domain - the membrane proton channel. These two domains are linked by a central stalk rotating inside the F(1) region and a stationary peripheral stalk. During catalysis, ATP synthesis in the catalytic domain of F(1) is coupled via a rotary mechanism of the central stalk subunits to proton translocation. In vivo, can only synthesize ATP although its ATP hydrolase activity can be activated artificially in vitro. Part of the complex F(0) domain. Part of the complex F(0) domain and the peripheric stalk, which acts as a stator to hold the catalytic alpha(3)beta(3) subcomplex and subunit a/ATP6 static relative to the rotary elements. The chain is ATP synthase peripheral stalk subunit b, mitochondrial from Bos taurus (Bovine).